The chain runs to 243 residues: Eukaryotic translation initiation factor 4E-2 (243 aa).

This sequence belongs to the eukaryotic initiation factor 4E family. In terms of assembly, eIF4F is a multi-subunit complex, the composition of which varies with external and internal environmental conditions. It is composed of at least eIF4A, eIF4E and eIF4G. eIF4E is also known to interact with other partners.

Its function is as follows. Recognizes and binds the 7-methylguanosine-containing mRNA cap during an early step in the initiation of protein synthesis and facilitates ribosome binding by inducing the unwinding of the mRNAs secondary structures. The protein is Eukaryotic translation initiation factor 4E-2 (tif452) of Schizosaccharomyces pombe (strain 972 / ATCC 24843) (Fission yeast).